The chain runs to 346 residues: Phosphoribosylformylglycinamidine cyclo-ligase (346 aa).

This sequence belongs to the AIR synthase family.

It is found in the cytoplasm. The catalysed reaction is 2-formamido-N(1)-(5-O-phospho-beta-D-ribosyl)acetamidine + ATP = 5-amino-1-(5-phospho-beta-D-ribosyl)imidazole + ADP + phosphate + H(+). It participates in purine metabolism; IMP biosynthesis via de novo pathway; 5-amino-1-(5-phospho-D-ribosyl)imidazole from N(2)-formyl-N(1)-(5-phospho-D-ribosyl)glycinamide: step 2/2. In Bacillus cereus (strain AH187), this protein is Phosphoribosylformylglycinamidine cyclo-ligase.